Here is a 345-residue protein sequence, read N- to C-terminus: NADH-quinone oxidoreductase subunit 8 (345 aa).

8 helical membrane passes run 15–35 (MLLQ…FMVY), 82–102 (FVYF…FVVI), 115–135 (VGIL…IMGG), 161–181 (LGLI…TAIV), 190–210 (LLNW…VSAL), 240–262 (YLLF…SLLF), 278–298 (WWMV…KAIV), and 309–329 (IGWK…AILA).

It belongs to the complex I subunit 1 family. In terms of assembly, NDH-1 is composed of at least 14 different subunits, Nqo1 to Nqo14. The complex has a L-shaped structure, with the hydrophobic arm (subunits Nqo7, Nqo8, Nqo10 to Nqo14) embedded in the inner membrane and the hydrophilic peripheral arm (subunits Nqo1 to Nqo6, Nqo9) protruding into the bacterial cytoplasm. The hydrophilic domain contains all the redox centers.

Its subcellular location is the cell inner membrane. The catalysed reaction is a quinone + NADH + 5 H(+)(in) = a quinol + NAD(+) + 4 H(+)(out). Functionally, NDH-1 shuttles electrons from NADH, via FMN and iron-sulfur (Fe-S) centers, to quinones in the respiratory chain. The immediate electron acceptor for the enzyme in this species is believed to be ubiquinone. Couples the redox reaction to proton translocation (for every two electrons transferred, four hydrogen ions are translocated across the cytoplasmic membrane), and thus conserves the redox energy in a proton gradient. The sequence is that of NADH-quinone oxidoreductase subunit 8 from Paracoccus denitrificans.